Reading from the N-terminus, the 239-residue chain is Small ribosomal subunit protein eS6B (239 aa).

Phosphoserine occurs at positions 148, 235, and 236.

Belongs to the eukaryotic ribosomal protein eS6 family. As to quaternary structure, component of the small ribosomal subunit (SSU). Mature yeast ribosomes consist of a small (40S) and a large (60S) subunit. The 40S small subunit contains 1 molecule of ribosomal RNA (18S rRNA) and at least 33 different proteins. The large 60S subunit contains 3 rRNA molecules (25S, 5.8S and 5S rRNA) and at least 46 different proteins. Interacts with snoRNA U3. uS11 interacts with MPP10. Component of the ribosomal small subunit (SSU) processome composed of at least 40 protein subunits and snoRNA U3.

The protein localises to the cytoplasm. Functionally, component of the ribosome, a large ribonucleoprotein complex responsible for the synthesis of proteins in the cell. The small ribosomal subunit (SSU) binds messenger RNAs (mRNAs) and translates the encoded message by selecting cognate aminoacyl-transfer RNA (tRNA) molecules. The large subunit (LSU) contains the ribosomal catalytic site termed the peptidyl transferase center (PTC), which catalyzes the formation of peptide bonds, thereby polymerizing the amino acids delivered by tRNAs into a polypeptide chain. The nascent polypeptides leave the ribosome through a tunnel in the LSU and interact with protein factors that function in enzymatic processing, targeting, and the membrane insertion of nascent chains at the exit of the ribosomal tunnel. eS6 is involved in nucleolar processing of pre-18S ribosomal RNA and ribosome assembly. The chain is Small ribosomal subunit protein eS6B (rps602) from Schizosaccharomyces pombe (strain 972 / ATCC 24843) (Fission yeast).